The chain runs to 447 residues: UPF0210 protein Ldb1026 (447 aa).

The protein belongs to the UPF0210 family. As to quaternary structure, homodimer.

The sequence is that of UPF0210 protein Ldb1026 from Lactobacillus delbrueckii subsp. bulgaricus (strain ATCC 11842 / DSM 20081 / BCRC 10696 / JCM 1002 / NBRC 13953 / NCIMB 11778 / NCTC 12712 / WDCM 00102 / Lb 14).